The sequence spans 248 residues: Small ribosomal subunit protein uS3 (248 aa).

The 75-residue stretch at 39 to 113 (IRAYLTKQLS…TIRINVVEVT (75 aa)) folds into the KH type-2 domain. Positions 218-248 (ERPEQKVPLQQPKRRQQRRRPTFEDRSAVEA) are disordered. Residues 238–248 (PTFEDRSAVEA) are compositionally biased toward basic and acidic residues.

It belongs to the universal ribosomal protein uS3 family. In terms of assembly, part of the 30S ribosomal subunit. Forms a tight complex with proteins S10 and S14.

Functionally, binds the lower part of the 30S subunit head. Binds mRNA in the 70S ribosome, positioning it for translation. The sequence is that of Small ribosomal subunit protein uS3 from Synechococcus sp. (strain JA-3-3Ab) (Cyanobacteria bacterium Yellowstone A-Prime).